We begin with the raw amino-acid sequence, 317 residues long: Olfactory receptor 10A5 (317 aa).

Over 1-26 (MAIGNWTEISEFILMSFSSLPTEIQS) the chain is Extracellular. N-linked (GlcNAc...) asparagine glycosylation occurs at Asn-5. Residues 27-47 (LLFLTFLTIYLVTLKGNSLII) form a helical membrane-spanning segment. The Cytoplasmic portion of the chain corresponds to 48 to 55 (LVTLADPM). A helical transmembrane segment spans residues 56-76 (LHSPMYFFLRNLSFLEIGFNL). The Extracellular segment spans residues 77-100 (VIVPKMLGTLLAQDTTISFLGCAT). Cys-98 and Cys-190 form a disulfide bridge. Residues 101–121 (QMYFFFFFGVAECFLLATMAY) form a helical membrane-spanning segment. Over 122–140 (DRYVAICSPLHYPVIMNQR) the chain is Cytoplasmic. A helical membrane pass occupies residues 141 to 161 (TRAKLAAASWFPGFPVATVQT). Topologically, residues 162 to 198 (TWLFSFPFCGTNKVNHFFCDSPPVLKLVCADTALFEI) are extracellular. A helical transmembrane segment spans residues 199–218 (YAIVGTILVVMIPCLLILCS). The Cytoplasmic segment spans residues 219 to 238 (YTRIAAAILKIPSAKGKHKA). The chain crosses the membrane as a helical span at residues 239–259 (FSTCSSHLLVVSLFYISSSLT). Topologically, residues 260 to 272 (YFWPKSNNSPESK) are extracellular. A helical transmembrane segment spans residues 273 to 293 (KLLSLSYTVVTPMLNPIIYSL). Residues 294 to 317 (RNSEVKNALSRTFHKVLALRNCIP) are Cytoplasmic-facing.

Belongs to the G-protein coupled receptor 1 family. Expressed in the tongue.

It is found in the cell membrane. Odorant receptor (Potential). May be involved in taste perception. In Homo sapiens (Human), this protein is Olfactory receptor 10A5 (OR10A5).